A 559-amino-acid chain; its full sequence is Potassium-transporting ATPase potassium-binding subunit (559 aa).

The next 13 membrane-spanning stretches (helical) occupy residues 5-25, 27-47, 63-83, 132-152, 170-190, 253-273, 283-303, 327-347, 356-376, 379-399, 416-436, 484-504, and 524-544; these read GFLL…PLGS, LARL…RILW, LLAL…LLFW, GLTV…FALI, LVRI…LFFI, LAQM…FGEA, LLWA…WAEV, FGVL…CGAV, ALGG…FGGV, GLYG…LMIG, MTAL…ALAM, LLAF…MAIA, and GALF…LTFI.

It belongs to the KdpA family. The system is composed of three essential subunits: KdpA, KdpB and KdpC.

It localises to the cell inner membrane. In terms of biological role, part of the high-affinity ATP-driven potassium transport (or Kdp) system, which catalyzes the hydrolysis of ATP coupled with the electrogenic transport of potassium into the cytoplasm. This subunit binds the periplasmic potassium ions and delivers the ions to the membrane domain of KdpB through an intramembrane tunnel. In Salmonella dublin (strain CT_02021853), this protein is Potassium-transporting ATPase potassium-binding subunit.